Reading from the N-terminus, the 396-residue chain is NADH-quinone oxidoreductase subunit D (396 aa).

Belongs to the complex I 49 kDa subunit family. As to quaternary structure, NDH-1 is composed of 14 different subunits. Subunits NuoB, C, D, E, F, and G constitute the peripheral sector of the complex.

It is found in the cell inner membrane. The enzyme catalyses a quinone + NADH + 5 H(+)(in) = a quinol + NAD(+) + 4 H(+)(out). In terms of biological role, NDH-1 shuttles electrons from NADH, via FMN and iron-sulfur (Fe-S) centers, to quinones in the respiratory chain. The immediate electron acceptor for the enzyme in this species is believed to be ubiquinone. Couples the redox reaction to proton translocation (for every two electrons transferred, four hydrogen ions are translocated across the cytoplasmic membrane), and thus conserves the redox energy in a proton gradient. This Agrobacterium fabrum (strain C58 / ATCC 33970) (Agrobacterium tumefaciens (strain C58)) protein is NADH-quinone oxidoreductase subunit D.